Reading from the N-terminus, the 209-residue chain is ATP-dependent Clp protease proteolytic subunit (209 aa).

S113 (nucleophile) is an active-site residue. H138 is a catalytic residue.

Belongs to the peptidase S14 family. As to quaternary structure, fourteen ClpP subunits assemble into 2 heptameric rings which stack back to back to give a disk-like structure with a central cavity, resembling the structure of eukaryotic proteasomes.

The protein localises to the cytoplasm. The catalysed reaction is Hydrolysis of proteins to small peptides in the presence of ATP and magnesium. alpha-casein is the usual test substrate. In the absence of ATP, only oligopeptides shorter than five residues are hydrolyzed (such as succinyl-Leu-Tyr-|-NHMec, and Leu-Tyr-Leu-|-Tyr-Trp, in which cleavage of the -Tyr-|-Leu- and -Tyr-|-Trp bonds also occurs).. In terms of biological role, cleaves peptides in various proteins in a process that requires ATP hydrolysis. Has a chymotrypsin-like activity. Plays a major role in the degradation of misfolded proteins. This is ATP-dependent Clp protease proteolytic subunit from Blochmanniella floridana.